The sequence spans 64 residues: Putative calcium channel toxin Tx758 (64 aa).

A signal peptide spans methionine 1 to alanine 18. The propeptide occupies glutamate 19–arginine 27. 3 disulfides stabilise this stretch: cysteine 29–cysteine 43, cysteine 36–cysteine 49, and cysteine 42–cysteine 58.

Belongs to the scorpion calcin-like family. In terms of tissue distribution, expressed by the venom gland.

The protein localises to the secreted. Its function is as follows. May increase intracellular calcium release through the activation of nuclear inositol 1,4,5-trisphosphate receptors (ITPR) of cardiomyocytes, thereby causing an increase in the contraction frequency of these cells. This chain is Putative calcium channel toxin Tx758, found in Buthus israelis (Israeli scorpion).